Here is a 488-residue protein sequence, read N- to C-terminus: Ribulose bisphosphate carboxylase large chain 2 (488 aa).

Substrate-binding residues include Asn-128 and Thr-178. The Proton acceptor role is filled by Lys-180. Position 182 (Lys-182) interacts with substrate. Mg(2+) contacts are provided by Lys-206, Asp-208, and Glu-209. Position 206 is an N6-carboxylysine (Lys-206). His-298 serves as the catalytic Proton acceptor. Residues Arg-299, His-331, and Ser-383 each coordinate substrate.

Belongs to the RuBisCO large chain family. Type I subfamily. As to quaternary structure, heterohexadecamer of 8 large chains and 8 small chains. Requires Mg(2+) as cofactor.

It carries out the reaction 2 (2R)-3-phosphoglycerate + 2 H(+) = D-ribulose 1,5-bisphosphate + CO2 + H2O. It catalyses the reaction D-ribulose 1,5-bisphosphate + O2 = 2-phosphoglycolate + (2R)-3-phosphoglycerate + 2 H(+). Functionally, ruBisCO catalyzes two reactions: the carboxylation of D-ribulose 1,5-bisphosphate, the primary event in carbon dioxide fixation, as well as the oxidative fragmentation of the pentose substrate. Both reactions occur simultaneously and in competition at the same active site. In Nitrobacter hamburgensis (strain DSM 10229 / NCIMB 13809 / X14), this protein is Ribulose bisphosphate carboxylase large chain 2.